We begin with the raw amino-acid sequence, 500 residues long: Probable cytochrome P450 514A2 (500 aa).

Residues 4-24 (IYTIILTIIILVLIISIKDLF) form a helical membrane-spanning segment. Cys-446 contributes to the heme binding site.

It belongs to the cytochrome P450 family. It depends on heme as a cofactor.

Its subcellular location is the membrane. The polypeptide is Probable cytochrome P450 514A2 (cyp514A2) (Dictyostelium discoideum (Social amoeba)).